A 623-amino-acid chain; its full sequence is AFI1-like protein C776.06c (623 aa).

A uDENN domain is found at 5–204; it reads DYLLTAIFDP…IDNIPKPGSE (200 aa). The cDENN domain occupies 248–386; it reads ISNLINTFID…SDATTTMDTK (139 aa). Residues 388 to 476 form the dDENN domain; sequence LFNNTSPFTP…WSWDNDDEKV (89 aa).

Belongs to the AFI1/mesA family.

Its subcellular location is the cytoplasm. It localises to the cell cortex. The protein resides in the nucleus. Its function is as follows. Involved in polarity establishment. This chain is AFI1-like protein C776.06c, found in Schizosaccharomyces pombe (strain 972 / ATCC 24843) (Fission yeast).